A 196-amino-acid polypeptide reads, in one-letter code: Putative 3-methyladenine DNA glycosylase (196 aa).

The protein belongs to the DNA glycosylase MPG family.

The protein is Putative 3-methyladenine DNA glycosylase of Chlorobium phaeovibrioides (strain DSM 265 / 1930) (Prosthecochloris vibrioformis (strain DSM 265)).